We begin with the raw amino-acid sequence, 439 residues long: Enolase (439 aa).

Substrate contacts are provided by histidine 157 and glutamate 166. Glutamate 209 acts as the Proton donor in catalysis. Mg(2+) is bound by residues aspartate 244, glutamate 297, and aspartate 324. Substrate contacts are provided by glutamate 297 and aspartate 324. Lysine 349 (proton acceptor) is an active-site residue. Substrate-binding positions include 376–379 and lysine 400; that span reads SHRS.

It belongs to the enolase family. Homodimer. The cofactor is Mg(2+).

It is found in the cytoplasm. It carries out the reaction (2R)-2-phosphoglycerate = phosphoenolpyruvate + H2O. The protein operates within carbohydrate degradation; glycolysis; pyruvate from D-glyceraldehyde 3-phosphate: step 4/5. This chain is Enolase (ENOL), found in Mastigamoeba balamuthi (Phreatamoeba balamuthi).